Reading from the N-terminus, the 1322-residue chain is Phosphoribosylformylglycinamidine synthase (1322 aa).

300-311 (GASTGAGGEIRD) lines the ATP pocket. A compositionally biased stretch (polar residues) spans 593–608 (QQTPQRANHTETSPTP). Residues 593–613 (QQTPQRANHTETSPTPNTLPP) form a disordered region. Position 702 (Ala702) interacts with ATP. Mg(2+) contacts are provided by Asp703, Glu742, Asn746, and Asp915. Ser917 provides a ligand contact to ATP. A Glutamine amidotransferase type-1 domain is found at 1073–1322 (VAILREQGIN…LFRNARAWVG (250 aa)). The active-site Nucleophile is the Cys1166. Residues His1287 and Glu1289 contribute to the active site.

It in the N-terminal section; belongs to the FGAMS family. As to quaternary structure, monomer.

The protein localises to the cytoplasm. It carries out the reaction N(2)-formyl-N(1)-(5-phospho-beta-D-ribosyl)glycinamide + L-glutamine + ATP + H2O = 2-formamido-N(1)-(5-O-phospho-beta-D-ribosyl)acetamidine + L-glutamate + ADP + phosphate + H(+). Its pathway is purine metabolism; IMP biosynthesis via de novo pathway; 5-amino-1-(5-phospho-D-ribosyl)imidazole from N(2)-formyl-N(1)-(5-phospho-D-ribosyl)glycinamide: step 1/2. Functionally, phosphoribosylformylglycinamidine synthase involved in the purines biosynthetic pathway. Catalyzes the ATP-dependent conversion of formylglycinamide ribonucleotide (FGAR) and glutamine to yield formylglycinamidine ribonucleotide (FGAM) and glutamate. The protein is Phosphoribosylformylglycinamidine synthase of Xylella fastidiosa (strain 9a5c).